The chain runs to 288 residues: Energy-coupling factor transporter ATP-binding protein EcfA2 (288 aa).

In terms of domain architecture, ABC transporter spans 3–245 (IEFKNVDYIY…PDWLKKHFLD (243 aa)). 40–47 (GHTGSGKS) lines the ATP pocket.

The protein belongs to the ABC transporter superfamily. Energy-coupling factor EcfA family. In terms of assembly, forms a stable energy-coupling factor (ECF) transporter complex composed of 2 membrane-embedded substrate-binding proteins (S component), 2 ATP-binding proteins (A component) and 2 transmembrane proteins (T component).

It localises to the cell membrane. Functionally, ATP-binding (A) component of a common energy-coupling factor (ECF) ABC-transporter complex. Unlike classic ABC transporters this ECF transporter provides the energy necessary to transport a number of different substrates. The polypeptide is Energy-coupling factor transporter ATP-binding protein EcfA2 (Lactobacillus gasseri (strain ATCC 33323 / DSM 20243 / BCRC 14619 / CIP 102991 / JCM 1131 / KCTC 3163 / NCIMB 11718 / NCTC 13722 / AM63)).